The following is a 267-amino-acid chain: Cytokinesis defective protein 7 (267 aa).

The interval 244 to 267 (RNQADQSILPPSGDQQHHRSELHA) is disordered. The span at 258–267 (QQHHRSELHA) shows a compositional bias: basic and acidic residues.

This Caenorhabditis elegans protein is Cytokinesis defective protein 7.